Consider the following 84-residue polypeptide: Mu-conotoxin-like Cal 12.2d (84 aa).

The N-terminal stretch at 1-19 is a signal peptide; that stretch reads MKLTCVLVVLLLVLPFGDL. Residues 20–42 constitute a propeptide that is removed on maturation; it reads ITTSNTEDNKRGATPWQNSLKAR. At Trp72 the chain carries 6'-bromotryptophan. Pro77 is modified (4-hydroxyproline). Trp81 is subject to 6'-bromotryptophan.

It belongs to the conotoxin O1 superfamily. Post-translationally, contains 4 disulfide bonds. In terms of tissue distribution, expressed by the venom duct.

The protein resides in the secreted. In terms of biological role, mu-conotoxins block voltage-gated sodium channels. This toxin reversibly blocks voltage-gated sodium channel in cephalopods, with no alteration in the voltage dependence of sodium conductance or on the kinetics of inactivation. This chain is Mu-conotoxin-like Cal 12.2d, found in Californiconus californicus (California cone).